A 338-amino-acid polypeptide reads, in one-letter code: LINE-1 retrotransposable element ORF1 protein (338 aa).

Positions 1–40 (MGKKQNRKTGNSKTQSASPPPKERSSSPATEQSWMENDFD) are disordered. 2 stretches are compositionally biased toward polar residues: residues 8–17 (KTGNSKTQSA) and 26–35 (SSPATEQSWM). Residues 49-153 (RSNYSELRED…QSLQEIWDYV (105 aa)) are a coiled coil. The tract at residues 157–252 (NLRLIGVPES…KGKPIRLTAD (96 aa)) is RNA recognition motif (RRM) domain. The interval 253–317 (LSAETLQARR…TTRPALKELL (65 aa)) is C-terminal domain (CTD).

Belongs to the transposase 22 family. As to quaternary structure, homotrimer (via coiled coil domain). May also form larger homooligomers. May interact with DDX39A, HNRNPA1, SERBP1 and YBX1. Interacts with TEX19 and UBR2. Interacts with MOV10. Interacts with APOBEC3D; this interaction inhibits LINE-1 retrotransposition. Post-translationally, polyubiquitinated, probably by UBR2, which induces its degradation.

Its subcellular location is the nucleus. It is found in the nucleolus. It localises to the cytoplasm. The protein resides in the cytoplasmic ribonucleoprotein granule. The protein localises to the stress granule. Its function is as follows. Nucleic acid-binding protein which is essential for retrotransposition of LINE-1 elements in the genome. Functions as a nucleic acid chaperone binding its own transcript and therefore preferentially mobilizing the transcript from which they are encoded. This Homo sapiens (Human) protein is LINE-1 retrotransposable element ORF1 protein (L1RE1).